We begin with the raw amino-acid sequence, 365 residues long: Peptide chain release factor 2 (365 aa).

Glutamine 251 carries the N5-methylglutamine modification.

It belongs to the prokaryotic/mitochondrial release factor family. In terms of processing, methylated by PrmC. Methylation increases the termination efficiency of RF2.

It localises to the cytoplasm. Functionally, peptide chain release factor 2 directs the termination of translation in response to the peptide chain termination codons UGA and UAA. This is Peptide chain release factor 2 from Campylobacter jejuni subsp. jejuni serotype O:23/36 (strain 81-176).